A 302-amino-acid polypeptide reads, in one-letter code: Polyamine aminopropyltransferase (302 aa).

Residues 4-239 form the PABS domain; that stretch reads WTWHLEWQTP…GLWGFIYASD (236 aa). An S-methyl-5'-thioadenosine-binding site is contributed by Q33. H64 and E88 together coordinate spermidine. S-methyl-5'-thioadenosine is bound by residues D108 and 140–141; that span reads DG. D158 serves as the catalytic Proton acceptor. P167 contributes to the S-methyl-5'-thioadenosine binding site.

This sequence belongs to the spermidine/spermine synthase family. In terms of assembly, homodimer or homotetramer.

It localises to the cytoplasm. It carries out the reaction S-adenosyl 3-(methylsulfanyl)propylamine + putrescine = S-methyl-5'-thioadenosine + spermidine + H(+). It participates in amine and polyamine biosynthesis; spermidine biosynthesis; spermidine from putrescine: step 1/1. Catalyzes the irreversible transfer of a propylamine group from the amino donor S-adenosylmethioninamine (decarboxy-AdoMet) to putrescine (1,4-diaminobutane) to yield spermidine. The sequence is that of Polyamine aminopropyltransferase from Sulfolobus acidocaldarius (strain ATCC 33909 / DSM 639 / JCM 8929 / NBRC 15157 / NCIMB 11770).